The chain runs to 475 residues: F-box protein At3g59150 (475 aa).

In terms of domain architecture, F-box spans G12 to D58.

The sequence is that of F-box protein At3g59150 from Arabidopsis thaliana (Mouse-ear cress).